We begin with the raw amino-acid sequence, 834 residues long: Inner nuclear membrane protein SRC1 (834 aa).

Residues 68 to 292 are disordered; it reads DEGIVKMDRP…TANGTGHSTP (225 aa). Residues 77–86 are compositionally biased toward low complexity; that stretch reads PSSSPSIASP. 3 positions are modified to phosphoserine: S78, S80, and S85. 2 stretches are compositionally biased toward acidic residues: residues 114–127 and 142–153; these read VSNDDDDDDDDDDD and DTDEVDDEEDDV. Polar residues predominate over residues 154–170; sequence ITSSSNKSDTNDFQQNS. S181 is subject to Phosphoserine. Residues 188–198 show a composition bias toward basic and acidic residues; that stretch reads NSKENKIDNKH. Phosphoserine occurs at positions 203, 204, and 206. Polar residues predominate over residues 243–266; it reads IKNTNRKPVSMDNFNDSLTSSGTE. Position 301 is a phosphoserine (S301). The tract at residues 307-364 is disordered; sequence PQKEVPSTILVPEVEQQEPSQSERTPSLFSSEGSGSESEAPLLPEITTPGPHQPMGNT. Low complexity-rich tracts occupy residues 317–329 and 336–345; these read VPEVEQQEPSQSE and SSEGSGSESE. T394 carries the post-translational modification Phosphothreonine. Phosphoserine is present on S427. A run of 2 helical transmembrane segments spans residues 455–475 and 708–728; these read LLALFLFCIFIVIPLLFGLWY and IWLMFLLIVISKVIEIKLKNY.

The protein resides in the nucleus inner membrane. Plays a role in sister chromatid separation. This chain is Inner nuclear membrane protein SRC1 (SRC1), found in Saccharomyces cerevisiae (strain ATCC 204508 / S288c) (Baker's yeast).